Reading from the N-terminus, the 135-residue chain is Small ribosomal subunit protein uS11 (135 aa).

The disordered stretch occupies residues 1-26 (MPPKSRTAGGARKTRRKEKKNVSHGH). Basic residues predominate over residues 12–23 (RKTRRKEKKNVS).

This sequence belongs to the universal ribosomal protein uS11 family. In terms of assembly, part of the 30S ribosomal subunit. Interacts with proteins S7 and S18. Binds to IF-3.

Functionally, located on the platform of the 30S subunit, it bridges several disparate RNA helices of the 16S rRNA. Forms part of the Shine-Dalgarno cleft in the 70S ribosome. In Beutenbergia cavernae (strain ATCC BAA-8 / DSM 12333 / CCUG 43141 / JCM 11478 / NBRC 16432 / NCIMB 13614 / HKI 0122), this protein is Small ribosomal subunit protein uS11.